The chain runs to 90 residues: Actobindin-B/C (90 aa).

WH2 domains lie at 4–21 and 40–57; these read TANP…LKHA and DHSS…LKHV. A disordered region spans residues 57 to 90; the sequence is VETQDRSAPVTEGATVKSNNHSALLGEIKSKAQE.

As to quaternary structure, monomer.

Functionally, is able to bind two actin monomers at high concentrations of G-actin. Inhibits actin polymerization by sequestering G-actin and stabilizing actin dimers. This chain is Actobindin-B/C (abnB), found in Dictyostelium discoideum (Social amoeba).